The sequence spans 496 residues: Glycylpeptide N-tetradecanoyltransferase 1 (496 aa).

Residues 1-82 are disordered; sequence MADESETAVK…STQDQPVKMT (82 aa). Phosphoserine is present on residues S31 and S47. The segment covering 55–66 has biased composition (basic residues); sequence KKKKKKQKKKKE. Position 83 is a phosphoserine (S83). Tetradecanoyl-CoA contacts are provided by Q118, F119, W120, F247, L248, C249, V250, S256, R258, V259, and A260.

The protein belongs to the NMT family. Ubiquitous.

Its subcellular location is the cytoplasm. The protein resides in the cytosol. It is found in the membrane. It catalyses the reaction N-terminal glycyl-[protein] + tetradecanoyl-CoA = N-tetradecanoylglycyl-[protein] + CoA + H(+). It carries out the reaction N-terminal glycyl-L-lysyl-[protein] + tetradecanoyl-CoA = N-terminal glycyl-(N(6)-tetradecanoyl)-L-lysyl-[protein] + CoA + H(+). Its function is as follows. Adds a myristoyl group to the N-terminal glycine residue of certain cellular and viral proteins. Also able to mediate N-terminal lysine myristoylation of proteins: catalyzes myristoylation of ARF6 on both 'Gly-2' and 'Lys-3'. Lysine myristoylation is required to maintain ARF6 on membranes during the GTPase cycle. Required for normal embryogenesis. This is Glycylpeptide N-tetradecanoyltransferase 1 from Mus musculus (Mouse).